The sequence spans 328 residues: NADH-quinone oxidoreductase subunit H 1 (328 aa).

The next 8 helical transmembrane spans lie at 11 to 31 (VVKAVVLALCVTLAVAVFLLF), 81 to 101 (LAPVIAFFCALGVWVVIPWAP), 116 to 136 (VLVILAIAAMGVYGTALGGWA), 154 to 174 (ISYELAMAMSLLGVILMTGSV), 189 to 209 (LFPQFLGFLVFYIASLAEAGW), 235 to 257 (GLFFLTELTHAVNSAVLSTTFFL), 269 to 289 (IPGFVWFLLKVILMVFVLYWI), and 308 to 328 (VLLPVAALNLVGTAIYVALWA).

The protein belongs to the complex I subunit 1 family. As to quaternary structure, NDH-1 is composed of 14 different subunits. Subunits NuoA, H, J, K, L, M, N constitute the membrane sector of the complex.

The protein localises to the cell membrane. It carries out the reaction a quinone + NADH + 5 H(+)(in) = a quinol + NAD(+) + 4 H(+)(out). Functionally, NDH-1 shuttles electrons from NADH, via FMN and iron-sulfur (Fe-S) centers, to quinones in the respiratory chain. The immediate electron acceptor for the enzyme in this species is believed to be ubiquinone. Couples the redox reaction to proton translocation (for every two electrons transferred, four hydrogen ions are translocated across the cytoplasmic membrane), and thus conserves the redox energy in a proton gradient. This subunit may bind ubiquinone. This chain is NADH-quinone oxidoreductase subunit H 1, found in Symbiobacterium thermophilum (strain DSM 24528 / JCM 14929 / IAM 14863 / T).